Reading from the N-terminus, the 96-residue chain is Probable quinol oxidase subunit 4 (96 aa).

Helical transmembrane passes span 8 to 28, 36 to 56, and 68 to 88; these read TVGF…TLYT, VTII…MFMH, and FKVI…YWVM.

The protein belongs to the cytochrome c oxidase bacterial subunit 4 family.

Its subcellular location is the cell membrane. The enzyme catalyses 2 a quinol + O2 = 2 a quinone + 2 H2O. In terms of biological role, catalyzes quinol oxidation with the concomitant reduction of oxygen to water. This is Probable quinol oxidase subunit 4 (qoxD) from Staphylococcus epidermidis (strain ATCC 35984 / DSM 28319 / BCRC 17069 / CCUG 31568 / BM 3577 / RP62A).